We begin with the raw amino-acid sequence, 767 residues long: Protein ROLLING AND ERECT LEAF 2 (767 aa).

Disordered regions lie at residues methionine 1–arginine 20, proline 78–phenylalanine 187, and arginine 201–valine 309. Pro residues-rich tracts occupy residues alanine 81–serine 90 and alanine 110–valine 126. Residues serine 145–serine 155 are compositionally biased toward low complexity. The span at arginine 201–arginine 210 shows a compositional bias: basic and acidic residues. Acidic residues predominate over residues glutamate 221 to glutamate 232. Over residues threonine 255–asparagine 264 the composition is skewed to basic and acidic residues.

Highly expressed in young leaves and panicles. Expressed at low levels in roots.

The protein resides in the cell membrane. In terms of biological role, involved in the regulation of leaf shape formation. May function by coordinating the expression of genes associated with leaf and bulliform cell development. The polypeptide is Protein ROLLING AND ERECT LEAF 2 (Oryza sativa subsp. japonica (Rice)).